A 267-amino-acid polypeptide reads, in one-letter code: MNDFITETWLRANHTLSEGSEIHLPADARLTPSARELLESRRLRIKFLDPQGRLFVDDDEQQPQPVHGLTSSDTHPQACCELCRQPVVKKPDTLTHLTADKMVAKSDPRLGFRAALDSAIALTVWLQIELAEPWQPWLFDIRSRLGNIMRADAIDEPLAAQSIVGLNEDELHRLSHQPLRYLDHDHLVPEASHGRDAALLNLLRTKVRETETLAAQVFITRSFEVLRPDILQALNRLSSTVYVMMILSVAKHPLTVAQIQQRLGEKP.

A divalent metal cation is bound by residues C80 and C83.

It belongs to the Cob(I)alamin adenosyltransferase family. EutT subfamily. In terms of assembly, homodimer. The cofactor is a divalent metal cation.

It is found in the bacterial microcompartment. It carries out the reaction 2 cob(II)alamin + reduced [electron-transfer flavoprotein] + 2 ATP + 2 H2O = 2 adenosylcob(III)alamin + oxidized [electron-transfer flavoprotein] + 2 phosphate + 2 diphosphate + 3 H(+). The enzyme catalyses 2 cob(II)inamide + reduced [electron-transfer flavoprotein] + 2 ATP + 2 H2O = 2 adenosylcob(III)inamide + oxidized [electron-transfer flavoprotein] + 2 phosphate + 2 diphosphate + 3 H(+). Its pathway is amine and polyamine degradation; ethanolamine degradation. Converts cyanocobalamin (CN-B12) to adenosylcobalamin (AdoCbl), the inducer of the eut operon. Is not active on cobinamide nor other intermediates in the adenosylcobalamin synthetic pathway. Allows full induction of the eut operon. Can use ADP, CTP and dATP in place of ATP, and cobinamide in place of cobalamin, none are as efficiently used as ATP and cobalamin. In terms of biological role, expression of the eut operon allows this bacteria to use ethanolamine (EA) as a carbon, nitrogen and energy source. It relies on cobalamin (vitamin B12) both as a cofactor for the ethanolamine ammonia-lyase (EAL) activity and to induce the operon. EA enhances bacterial survival in macrophages in a concentration-dependent manner, suggesting it is an important nutrient during infection. The polypeptide is Corrinoid adenosyltransferase EutT (Salmonella typhimurium (strain LT2 / SGSC1412 / ATCC 700720)).